The chain runs to 354 residues: Guanine nucleotide-binding protein G(o) subunit alpha (354 aa).

Glycine 2 is lipidated: N-myristoyl glycine. Cysteine 3 carries the S-palmitoyl cysteine lipid modification. One can recognise a G-alpha domain in the interval 32–354 (KDVKLLLLGA…ANNLRGCGLY (323 aa)). A G1 motif region spans residues 35–48 (KLLLLGAGESGKST). Positions 43, 46, 47, 48, 152, 176, 177, 178, and 179 each coordinate GTP. Serine 47 is a Mg(2+) binding site. The segment at 174–182 (DILRTRVKT) is G2 motif. Threonine 182 contacts Mg(2+). Positions 197 to 206 (FRLFDVGGQR) are G3 motif. At glutamine 205 the chain carries 5-glutamyl histamine. The interval 266-273 (ILFLNKKD) is G4 motif. GTP is bound by residues asparagine 270, aspartate 273, and cysteine 325. Residues 324–329 (TCATDT) form a G5 motif region. A Deamidated asparagine; in form Alpha-3 modification is found at asparagine 346. A lipid anchor (S-palmitoyl cysteine) is attached at cysteine 351.

The protein belongs to the G-alpha family. G(i/o/t/z) subfamily. G proteins are composed of 3 units; alpha, beta and gamma. The alpha chain contains the guanine nucleotide binding site. Forms a complex with GNB1 and GNG3. Interacts with RGS14. Interacts with RGS16. Interacts with RGS19. Interacts (when palmitoylated) with ADGRG3. Deamidation of Asn-346 converts alpha-1 to alpha-3. In terms of processing, histaminylated at Gln-205 residues by TGM2.

It localises to the cell membrane. It is found in the membrane. The catalysed reaction is GTP + H2O = GDP + phosphate + H(+). With respect to regulation, the GTPase activity is promoted by GTPAse activators, such as RGS14, RGS16 and RGS19. In terms of biological role, guanine nucleotide-binding proteins (G proteins) function as transducers downstream of G protein-coupled receptors (GPCRs) in numerous signaling cascades. The alpha chain contains the guanine nucleotide binding site and alternates between an active, GTP-bound state and an inactive, GDP-bound state. Signaling by an activated GPCR promotes GDP release and GTP binding. The alpha subunit has a low GTPase activity that converts bound GTP to GDP, thereby terminating the signal. Both GDP release and GTP hydrolysis are modulated by numerous regulatory proteins. Signaling is mediated via effector proteins, such as adenylate cyclase. Inhibits adenylate cyclase activity, leading to decreased intracellular cAMP levels. The polypeptide is Guanine nucleotide-binding protein G(o) subunit alpha (GNAO1) (Cricetulus longicaudatus (Long-tailed dwarf hamster)).